The following is a 278-amino-acid chain: Non-haem bromoperoxidase BPO-A2 (278 aa).

The AB hydrolase-1 domain occupies 26-264; it reads PVVLIHGFPL…GAPHGLLWTH (239 aa). Active-site residues include Ser-99, Asp-229, and His-258.

The protein belongs to the AB hydrolase superfamily. Bacterial non-heme haloperoxidase / perhydrolase family. Homotrimer.

Functionally, may be a chlorinating enzyme involved in 7-chlorotetracycline biosynthesis. This chain is Non-haem bromoperoxidase BPO-A2 (bpoA2), found in Kitasatospora aureofaciens (Streptomyces aureofaciens).